A 468-amino-acid polypeptide reads, in one-letter code: Peroxisome proliferator-activated receptor alpha (468 aa).

The segment at residues N99–F173 is a DNA-binding region (nuclear receptor). NR C4-type zinc fingers lie at residues C102–C122 and C139–C161. The NR LBD domain occupies F239–D466. Residues D304–L433 are required for heterodimerization with RXRA.

Belongs to the nuclear hormone receptor family. NR1 subfamily. Heterodimer; with RXRA. This heterodimerization is required for DNA binding and transactivation activity. Interacts with NCOA3 coactivator. Interacts with CITED2; the interaction stimulates its transcriptional activity. Also interacts with PPARBP in vitro. Interacts with AKAP13, LPIN1, PRDM16 and coactivator NCOA6. Interacts with ASXL1 and ASXL2. Interacts with PER2. Interacts with SIRT1; the interaction seems to be modulated by NAD(+) levels. Interacts with CRY1 and CRY2. In hepatocytes, interacts with PAQR3 and HUWE1; the interactions promote PPARA poylubiquitination and HUWE1-mediated degradation. Phosphorylated. In terms of processing, ubiquitinated by E3 ubiquitin-protein ligase HUWE1; leading to proteasomal degradation. As to expression, expressed predominantly in liver and kidney.

It localises to the nucleus. Functionally, ligand-activated transcription factor. Key regulator of lipid metabolism. Activated by the endogenous ligand 1-palmitoyl-2-oleoyl-sn-glycerol-3-phosphocholine (16:0/18:1-GPC). Activated by oleylethanolamide, a naturally occurring lipid that regulates satiety. Receptor for peroxisome proliferators such as hypolipidemic drugs and fatty acids. Regulates the peroxisomal beta-oxidation pathway of fatty acids. Functions as a transcription activator for the ACOX1 and P450 genes. Transactivation activity requires heterodimerization with RXRA and is antagonized by NR2C2. May be required for the propagation of clock information to metabolic pathways regulated by PER2. The polypeptide is Peroxisome proliferator-activated receptor alpha (Ppara) (Rattus norvegicus (Rat)).